Consider the following 291-residue polypeptide: uncharacterized protein (291 aa).

2 helical membrane-spanning segments follow: residues 42 to 62 and 86 to 106; these read IFFF…RALW and TIFP…LALD.

The protein belongs to the cytochrome c oxidase subunit 2 family.

It localises to the mitochondrion membrane. This is an uncharacterized protein from Arabidopsis thaliana (Mouse-ear cress).